The following is a 609-amino-acid chain: Wee1-like protein kinase (609 aa).

Over residues 1-10 (MAFRQSEHEM) the composition is skewed to basic and acidic residues. Disordered regions lie at residues 1-88 (MAFR…SMSP) and 147-166 (PLHNRKLPTQDTANVNPFTP). Residues S23, S25, and S27 each carry the phosphoserine modification. Positions 37 to 48 (RFADDDFDKDTP) are enriched in basic and acidic residues. T47 is modified (phosphothreonine). S52 carries the post-translational modification Phosphoserine. Residues 153–165 (LPTQDTANVNPFT) show a composition bias toward polar residues. Phosphothreonine is present on T165. S168 carries the phosphoserine modification. The Protein kinase domain occupies 239 to 517 (FMQVNVIGVG…SQSIFSHPIL (279 aa)). Residues 245 to 253 (IGVGEFGVV) and K268 each bind ATP. The active-site Proton acceptor is D361. Mg(2+)-binding residues include N366 and D412.

Belongs to the protein kinase superfamily. Ser/Thr protein kinase family. WEE1 subfamily. The cofactor is Mg(2+). In terms of processing, phosphorylated during M and G1 phases. As to expression, expressed in embryos; expression remains high in the proliferating cells of the central nervous system well after cells in the rest of the embryo have ceased dividing.

Its subcellular location is the nucleus. It catalyses the reaction L-tyrosyl-[protein] + ATP = O-phospho-L-tyrosyl-[protein] + ADP + H(+). Its activity is regulated as follows. Negatively regulated by phosphorylation in the M-phase. Acts as a negative regulator of entry into mitosis (G2 to M transition). This kinase specifically phosphorylates and inactivates cyclin B1-complexed CDC2. This Drosophila melanogaster (Fruit fly) protein is Wee1-like protein kinase.